A 387-amino-acid polypeptide reads, in one-letter code: Sorting nexin-7 (387 aa).

The 122-residue stretch at 30–151 (KDLFITVDAP…VFLTAQAEEL (122 aa)) folds into the PX domain. Positions 73, 75, 103, and 117 each coordinate a 1,2-diacyl-sn-glycero-3-phospho-(1D-myo-inositol-3-phosphate). The BAR domain occupies 178-387 (GVKNRPEEFM…PSEEDSEEKL (210 aa)).

Belongs to the sorting nexin family. As to quaternary structure, heterodimer; heterodimerizes with SNX4.

The protein resides in the early endosome membrane. Its function is as follows. Involved in the regulation of endocytosis and in several stages of intracellular trafficking. Together with SNX4, involved in autophagosome assembly by regulating trafficking and recycling of phospholipid scramblase ATG9A. In Mus musculus (Mouse), this protein is Sorting nexin-7.